The chain runs to 388 residues: 5-hydroxytryptamine receptor 4 (388 aa).

At 1–19 (MDKLDANVSSEEGFGSVEK) the chain is on the extracellular side. Residue asparagine 7 is glycosylated (N-linked (GlcNAc...) asparagine). A helical transmembrane segment spans residues 20 to 44 (VVLLTFLSTVILMAILGNLLVMVAV). Residues 45–54 (CWDRQLRKIK) lie on the Cytoplasmic side of the membrane. The chain crosses the membrane as a helical span at residues 55 to 78 (TNYFIVSLAFADLLVSVLVMPFGA). At 79-92 (IELVQDIWIYGEVF) the chain is on the extracellular side. Residues 93–117 (CLVRTSLDVLLTTASIFHLCCISLD) form a helical membrane-spanning segment. A disulfide bridge connects residues cysteine 93 and cysteine 184. Residue aspartate 100 participates in serotonin binding. The Cytoplasmic segment spans residues 118 to 133 (RYYAICCQPLVYRNKM). A helical transmembrane segment spans residues 134–157 (TPLRIALMLGGCWVIPTFISFLPI). At 158–188 (MQGWNNIGIIDLIEKRKFNQNSNSTYCVFMV) the chain is on the extracellular side. The helical transmembrane segment at 189–212 (NKPYAITCSVVAFYIPFLLMVLAY) threads the bilayer. Residues 213–257 (YRIYVTAKEHAHQIQMLQRAGASSESRPQSADQHSTHRMRTETKA) are Cytoplasmic-facing. A helical membrane pass occupies residues 258-283 (AKTLCIIMGCFCLCWAPFFVTNIVDP). Serotonin is bound at residue asparagine 279. The Extracellular segment spans residues 284–290 (FIDYTVP). A helical membrane pass occupies residues 291-314 (GQVWTAFLWLGYINSGLNPFLYAF). The Cytoplasmic segment spans residues 315 to 388 (LNKSFRRAFL…PLVAAQPSDT (74 aa)).

The protein belongs to the G-protein coupled receptor 1 family. As to quaternary structure, interacts (via C-terminus 330-346 AA) with GRK5; this interaction is promoted by 5-HT (serotonin). In terms of assembly, interacts with MAGI2, MPP3, NHERF1 and SNX27 isoforms 1 and 2. Forms a complex including NHERF1 and EZR. Interacts with PATJ, NOS1 and SEC23A. As to expression, expressed in ileum, brain, and atrium, but not in the ventricle. Mainly expressed in atria and cardiac ventricle. In terms of tissue distribution, expressed in all cardiovascular tissues analyzed.

The protein localises to the cell membrane. The protein resides in the endosome membrane. In terms of biological role, G-protein coupled receptor for 5-hydroxytryptamine (serotonin), a biogenic hormone that functions as a neurotransmitter, a hormone and a mitogen. Ligand binding causes a conformation change that triggers signaling via guanine nucleotide-binding proteins (G proteins) and modulates the activity of downstream effectors. HTR4 is coupled to G(s) G alpha proteins and mediates activation of adenylate cyclase activity. The sequence is that of 5-hydroxytryptamine receptor 4 from Homo sapiens (Human).